Here is a 276-residue protein sequence, read N- to C-terminus: MAIKHYKPITNGRRNMTGSDFAEITSTSPEKSLLAPLPRKAGRNNQGKLTVRHRGGGHKRQYRIIDFKRNKDGIPAKVATIEYDPNRSANIALLHYLDGEKRYIIAPKGLTVGTQVVNGPEADIKVGNCLPLQNIPVGTVIHNIELKPGKGGQLVRSAGASAQVLGKEGKYVLVRLKSGEVRMILSTCRATIGQVGNEQHELINIGKAGRSRWKGIRPTVRGSVMNPNDHPHGGGEGRTSIGRPSPMSPWGKPTLGKKTRKKKNRSNKLIVRGRKK.

Disordered regions lie at residues 36–55 (PLPRKAGRNNQGKLTVRHRG) and 219–276 (TVRG…GRKK). The segment covering 255–276 (LGKKTRKKKNRSNKLIVRGRKK) has biased composition (basic residues).

It belongs to the universal ribosomal protein uL2 family. Part of the 50S ribosomal subunit. Forms a bridge to the 30S subunit in the 70S ribosome.

In terms of biological role, one of the primary rRNA binding proteins. Required for association of the 30S and 50S subunits to form the 70S ribosome, for tRNA binding and peptide bond formation. It has been suggested to have peptidyltransferase activity; this is somewhat controversial. Makes several contacts with the 16S rRNA in the 70S ribosome. This chain is Large ribosomal subunit protein uL2, found in Macrococcus caseolyticus (strain JCSC5402) (Macrococcoides caseolyticum).